We begin with the raw amino-acid sequence, 221 residues long: Iron-sulfur cluster repair protein YtfE (221 aa).

Belongs to the RIC family. YtfE subfamily. In terms of assembly, homodimer.

The protein localises to the cytoplasm. Di-iron-containing protein involved in the repair of iron-sulfur clusters damaged by oxidative and nitrosative stress conditions. The polypeptide is Iron-sulfur cluster repair protein YtfE (Dickeya chrysanthemi (strain Ech1591) (Dickeya zeae (strain Ech1591))).